We begin with the raw amino-acid sequence, 840 residues long: Probable sulfate permease C869.05c (840 aa).

12 consecutive transmembrane segments (helical) span residues 120–140, 148–168, 173–193, 208–228, 230–250, 278–298, 315–335, 410–430, 447–467, 470–490, 505–525, and 527–547; these read WLIN…PQGM, LPSE…CFFA, VSIG…ANVM, LALL…GFII, FIPV…ILSG, LPDT…LFFT, AFFL…TAIS, LIAM…PATG, IAGI…TDAF, IPNA…ILPM, CIFF…GIYV, and VCLA…SFLG. In terms of domain architecture, STAS spans 578 to 733; that stretch reads NLEIQSPPPG…CVEVAAPLRD (156 aa). At S823 the chain carries Phosphoserine.

This sequence belongs to the SLC26A/SulP transporter (TC 2.A.53) family.

The protein resides in the membrane. In terms of biological role, high affinity uptake of sulfate into the cell. This Schizosaccharomyces pombe (strain 972 / ATCC 24843) (Fission yeast) protein is Probable sulfate permease C869.05c.